A 727-amino-acid chain; its full sequence is Glycerol-3-phosphate dehydrogenase, mitochondrial (727 aa).

The transit peptide at 1–42 (MAFQKAVKGTILVGGGALATVLGLSQFAHYRRKQMNLAYVKA) directs the protein to the mitochondrion. Residue 71-99 (DILVIGGGATGSGCALDAVTRGLKTALVE) coordinates FAD. Phosphotyrosine is present on Tyr601. EF-hand domains are found at residues 623–658 (SDIDRYKKRFHKFDADQKGFITIVDVQRVLESINVQ) and 659–694 (MDENTLHEILNEVDLNKNGQVELNEFLQLMSAIQKG). Ca(2+)-binding residues include Asp672, Asn674, Asn676, Gln678, and Glu683.

Belongs to the FAD-dependent glycerol-3-phosphate dehydrogenase family. It depends on FAD as a cofactor.

The protein resides in the mitochondrion. It carries out the reaction a quinone + sn-glycerol 3-phosphate = dihydroxyacetone phosphate + a quinol. Its pathway is polyol metabolism; glycerol degradation via glycerol kinase pathway; glycerone phosphate from sn-glycerol 3-phosphate (anaerobic route): step 1/1. Its activity is regulated as follows. Calcium-binding enhance the activity of the enzyme. Its function is as follows. Calcium-responsive mitochondrial glycerol-3-phosphate dehydrogenase which seems to be a key component of the pancreatic beta-cell glucose-sensing device. The polypeptide is Glycerol-3-phosphate dehydrogenase, mitochondrial (Homo sapiens (Human)).